A 75-amino-acid polypeptide reads, in one-letter code: Small ribosomal subunit protein bS16 (75 aa).

This sequence belongs to the bacterial ribosomal protein bS16 family.

The polypeptide is Small ribosomal subunit protein bS16 (Aliarcobacter butzleri (strain RM4018) (Arcobacter butzleri)).